We begin with the raw amino-acid sequence, 161 residues long: ATP synthase subunit b 1 (161 aa).

The helical transmembrane segment at 5-25 (AETWVAVAFVLMVALFIYFGA) threads the bilayer.

This sequence belongs to the ATPase B chain family. In terms of assembly, F-type ATPases have 2 components, F(1) - the catalytic core - and F(0) - the membrane proton channel. F(1) has five subunits: alpha(3), beta(3), gamma(1), delta(1), epsilon(1). F(0) has three main subunits: a(1), b(2) and c(10-14). The alpha and beta chains form an alternating ring which encloses part of the gamma chain. F(1) is attached to F(0) by a central stalk formed by the gamma and epsilon chains, while a peripheral stalk is formed by the delta and b chains.

The protein localises to the cell inner membrane. Functionally, f(1)F(0) ATP synthase produces ATP from ADP in the presence of a proton or sodium gradient. F-type ATPases consist of two structural domains, F(1) containing the extramembraneous catalytic core and F(0) containing the membrane proton channel, linked together by a central stalk and a peripheral stalk. During catalysis, ATP synthesis in the catalytic domain of F(1) is coupled via a rotary mechanism of the central stalk subunits to proton translocation. Its function is as follows. Component of the F(0) channel, it forms part of the peripheral stalk, linking F(1) to F(0). This is ATP synthase subunit b 1 from Afipia carboxidovorans (strain ATCC 49405 / DSM 1227 / KCTC 32145 / OM5) (Oligotropha carboxidovorans).